Consider the following 425-residue polypeptide: Type I restriction enzyme MjaVIII specificity subunit (425 aa).

Belongs to the type-I restriction system S methylase family. The type I restriction/modification system is composed of three polypeptides R, M and S.

The specificity (S) subunit of a type I restriction enzyme; this subunit dictates DNA sequence specificity. The M and S subunits together form a methyltransferase (MTase) that methylates A-2 on the top and A-3 on the bottom strand of the sequence 5'-GAYN(5)GTAA-3'. In the presence of the R subunit the complex can also act as an endonuclease, binding to the same target sequence but cutting the DNA some distance from this site. Whether the DNA is cut or modified depends on the methylation state of the target sequence. When the target site is unmodified, the DNA is cut. When the target site is hemimethylated, the complex acts as a maintenance MTase modifying the DNA so that both strands become methylated. After locating a non-methylated recognition site, the enzyme complex serves as a molecular motor that translocates DNA in an ATP-dependent manner until a collision occurs that triggers cleavage. This is Type I restriction enzyme MjaVIII specificity subunit from Methanocaldococcus jannaschii (strain ATCC 43067 / DSM 2661 / JAL-1 / JCM 10045 / NBRC 100440) (Methanococcus jannaschii).